Here is a 78-residue protein sequence, read N- to C-terminus: Acyl carrier protein (78 aa).

Residues 2–77 enclose the Carrier domain; that stretch reads STIEESVKAI…AAIDFIQASQ (76 aa). At Ser37 the chain carries O-(pantetheine 4'-phosphoryl)serine.

It belongs to the acyl carrier protein (ACP) family. In terms of processing, 4'-phosphopantetheine is transferred from CoA to a specific serine of apo-ACP by AcpS. This modification is essential for activity because fatty acids are bound in thioester linkage to the sulfhydryl of the prosthetic group.

The protein localises to the cytoplasm. Its pathway is lipid metabolism; fatty acid biosynthesis. In terms of biological role, carrier of the growing fatty acid chain in fatty acid biosynthesis. This is Acyl carrier protein from Sodalis glossinidius (strain morsitans).